A 156-amino-acid chain; its full sequence is Transcription elongation factor GreA (156 aa).

The stretch at 46 to 73 forms a coiled coil; sequence AEYHAAREKQSFIEGRIKELEALLSLAE.

This sequence belongs to the GreA/GreB family.

Its function is as follows. Necessary for efficient RNA polymerase transcription elongation past template-encoded arresting sites. The arresting sites in DNA have the property of trapping a certain fraction of elongating RNA polymerases that pass through, resulting in locked ternary complexes. Cleavage of the nascent transcript by cleavage factors such as GreA or GreB allows the resumption of elongation from the new 3'terminus. GreA releases sequences of 2 to 3 nucleotides. The protein is Transcription elongation factor GreA of Cereibacter sphaeroides (strain ATCC 17025 / ATH 2.4.3) (Rhodobacter sphaeroides).